The following is a 557-amino-acid chain: Dihydroxy-acid dehydratase (557 aa).

C47 serves as a coordination point for [2Fe-2S] cluster. Residue D79 coordinates Mg(2+). C120 contacts [2Fe-2S] cluster. Mg(2+)-binding residues include D121 and K122. K122 is subject to N6-carboxylysine. Residue C192 coordinates [2Fe-2S] cluster. E444 is a binding site for Mg(2+). S470 serves as the catalytic Proton acceptor.

This sequence belongs to the IlvD/Edd family. As to quaternary structure, homodimer. The cofactor is [2Fe-2S] cluster. Mg(2+) serves as cofactor.

It catalyses the reaction (2R)-2,3-dihydroxy-3-methylbutanoate = 3-methyl-2-oxobutanoate + H2O. It carries out the reaction (2R,3R)-2,3-dihydroxy-3-methylpentanoate = (S)-3-methyl-2-oxopentanoate + H2O. Its pathway is amino-acid biosynthesis; L-isoleucine biosynthesis; L-isoleucine from 2-oxobutanoate: step 3/4. It participates in amino-acid biosynthesis; L-valine biosynthesis; L-valine from pyruvate: step 3/4. Functionally, functions in the biosynthesis of branched-chain amino acids. Catalyzes the dehydration of (2R,3R)-2,3-dihydroxy-3-methylpentanoate (2,3-dihydroxy-3-methylvalerate) into 2-oxo-3-methylpentanoate (2-oxo-3-methylvalerate) and of (2R)-2,3-dihydroxy-3-methylbutanoate (2,3-dihydroxyisovalerate) into 2-oxo-3-methylbutanoate (2-oxoisovalerate), the penultimate precursor to L-isoleucine and L-valine, respectively. This Synechococcus sp. (strain CC9605) protein is Dihydroxy-acid dehydratase.